Here is a 165-residue protein sequence, read N- to C-terminus: Large ribosomal subunit protein uL15 (165 aa).

A compositionally biased stretch (basic residues) spans M1 to G29. Disordered regions lie at residues M1–Q59 and K133–E165. Basic and acidic residues predominate over residues G30–L47. A compositionally biased stretch (acidic residues) spans A154 to E165.

This sequence belongs to the universal ribosomal protein uL15 family. Part of the 50S ribosomal subunit. Interacts weakly with proteins L18e and L32e.

Functionally, binds to the 23S rRNA. The sequence is that of Large ribosomal subunit protein uL15 (rpl15) from Haloarcula marismortui (strain ATCC 43049 / DSM 3752 / JCM 8966 / VKM B-1809) (Halobacterium marismortui).